Here is a 94-residue protein sequence, read N- to C-terminus: Anaphase-promoting complex subunit 11 (94 aa).

An RING-type zinc finger spans residues 35-78 (CPQCTSPGDNCPIVWGKCKHIFHAHCIQNWLATSGSQGQCPMDR).

In terms of assembly, the APC/C is composed of at least 13 subunits: apc1, apc2, nuc2, apc4, apc5, cut9, apc8, apc10, apc11, hcn1, apc13, apc14 and apc15.

In terms of biological role, component of the anaphase-promoting complex/cyclosome (APC/C), a cell cycle-regulated E3 ubiquitin-protein ligase complex that controls progression through mitosis and the G1 phase of the cell cycle. The APC/C is thought to confer substrate specificity and, in the presence of ubiquitin-conjugating E2 enzymes, it catalyzes the formation of protein-ubiquitin conjugates that are subsequently degraded by the 26S proteasome. The protein is Anaphase-promoting complex subunit 11 (apc11) of Schizosaccharomyces pombe (strain 972 / ATCC 24843) (Fission yeast).